Reading from the N-terminus, the 589-residue chain is Bifunctional protein TrpGD (589 aa).

The Glutamine amidotransferase type-1 domain maps to 46–241 (RVIVIDNYDS…LNIQDIQVKK (196 aa)). 99-101 (GPG) is a binding site for L-glutamine. Cysteine 126 serves as the catalytic Nucleophile; for GATase activity. Residues glutamine 130 and 176–177 (SL) each bind L-glutamine. Catalysis depends on for GATase activity residues histidine 215 and glutamate 217. Residues 253 to 589 (ALKKLVEFED…MDYQKTLGNS (337 aa)) are anthranilate phosphoribosyltransferase.

This sequence in the C-terminal section; belongs to the anthranilate phosphoribosyltransferase family. As to quaternary structure, heterotetramer consisting of two non-identical subunits: a beta subunit (TrpG) and a large alpha subunit (TrpE).

It catalyses the reaction chorismate + L-glutamine = anthranilate + pyruvate + L-glutamate + H(+). The enzyme catalyses N-(5-phospho-beta-D-ribosyl)anthranilate + diphosphate = 5-phospho-alpha-D-ribose 1-diphosphate + anthranilate. The protein operates within amino-acid biosynthesis; L-tryptophan biosynthesis; L-tryptophan from chorismate: step 1/5. It functions in the pathway amino-acid biosynthesis; L-tryptophan biosynthesis; L-tryptophan from chorismate: step 2/5. Its function is as follows. Part of a heterotetrameric complex that catalyzes the two-step biosynthesis of anthranilate, an intermediate in the biosynthesis of L-tryptophan. In the first step, the glutamine-binding beta subunit (TrpG) of anthranilate synthase (AS) provides the glutamine amidotransferase activity which generates ammonia as a substrate that, along with chorismate, is used in the second step, catalyzed by the large alpha subunit of AS (TrpE) to produce anthranilate. In the absence of TrpG, TrpE can synthesize anthranilate directly from chorismate and high concentrations of ammonia. In addition to synthesizing anthranilate, it also catalyzes the second step of the pathway, the transfer of the phosphoribosyl group of 5-phosphorylribose-1-pyrophosphate (PRPP) to anthranilate. The polypeptide is Bifunctional protein TrpGD (trpGD) (Thermotoga maritima (strain ATCC 43589 / DSM 3109 / JCM 10099 / NBRC 100826 / MSB8)).